A 372-amino-acid polypeptide reads, in one-letter code: Transcription factor MYB80 (372 aa).

HTH myb-type domains are found at residues 9–65 (KDNV…RPDL) and 66–116 (KHGE…KKKL). 2 consecutive DNA-binding regions (H-T-H motif) follow at residues 37 to 61 (WRLI…TNYL) and 89 to 112 (WSVI…NTKL). A compositionally biased stretch (polar residues) spans 298-311 (MWSHQSLYSGSSGT). The tract at residues 298 to 347 (MWSHQSLYSGSSGTEEARRELPEKGNDSVGSSGGDDDAADDGKDSGKGAA) is disordered. The segment covering 312-323 (EEARRELPEKGN) has biased composition (basic and acidic residues).

It is found in the nucleus. Essential for tapetum development in anthers and microsporogenesis. May regulate the timing of tapetal programmed cell death (PCD) which is critical for pollen development. This Oryza sativa subsp. japonica (Rice) protein is Transcription factor MYB80.